Reading from the N-terminus, the 383-residue chain is Acetylornithine deacetylase (383 aa).

H80 is a binding site for Zn(2+). D82 is an active-site residue. A Zn(2+)-binding site is contributed by D112. The active site involves E144. Residues E145, E169, and H355 each coordinate Zn(2+).

It belongs to the peptidase M20A family. ArgE subfamily. In terms of assembly, homodimer. Zn(2+) is required as a cofactor. Requires Co(2+) as cofactor. Glutathione serves as cofactor.

It is found in the cytoplasm. The enzyme catalyses N(2)-acetyl-L-ornithine + H2O = L-ornithine + acetate. It functions in the pathway amino-acid biosynthesis; L-arginine biosynthesis; L-ornithine from N(2)-acetyl-L-ornithine (linear): step 1/1. Functionally, catalyzes the hydrolysis of the amide bond of N(2)-acetylated L-amino acids. Cleaves the acetyl group from N-acetyl-L-ornithine to form L-ornithine, an intermediate in L-arginine biosynthesis pathway, and a branchpoint in the synthesis of polyamines. The sequence is that of Acetylornithine deacetylase from Escherichia coli (strain SMS-3-5 / SECEC).